The primary structure comprises 456 residues: Hydroxymethylglutaryl-CoA synthase ERG13 (456 aa).

Ala-35 is a (3S)-3-hydroxy-3-methylglutaryl-CoA binding site. The active-site Proton donor/acceptor is the Glu-86. Positions 118, 156, 160, 210, 259, 268, 336, and 370 each coordinate (3S)-3-hydroxy-3-methylglutaryl-CoA. Cys-118 (acyl-thioester intermediate) is an active-site residue. His-259 functions as the Proton donor/acceptor in the catalytic mechanism.

This sequence belongs to the thiolase-like superfamily. HMG-CoA synthase family.

It catalyses the reaction acetoacetyl-CoA + acetyl-CoA + H2O = (3S)-3-hydroxy-3-methylglutaryl-CoA + CoA + H(+). The protein operates within metabolic intermediate biosynthesis; (R)-mevalonate biosynthesis; (R)-mevalonate from acetyl-CoA: step 2/3. Its function is as follows. Hydroxymethylglutaryl-CoA synthase; part of the first module of ergosterol biosynthesis pathway that includes the early steps of the pathway, conserved across all eukaryotes, and which results in the formation of mevalonate from acetyl-coenzyme A (acetyl-CoA). ERG13 condenses acetyl-CoA with acetoacetyl-CoA to form hydroxymethylglutaryl-CoA (HMG-CoA). The first module starts with the action of the cytosolic acetyl-CoA acetyltransferase ERG10B that catalyzes the formation of acetoacetyl-CoA. The hydroxymethylglutaryl-CoA synthases ERG13 then condenses acetyl-CoA with acetoacetyl-CoA to form HMG-CoA. The rate-limiting step of the early module is the reduction to mevalonate by the 3-hydroxy-3-methylglutaryl-coenzyme A (HMG-CoA) reductases HMG1. In Gibberella zeae (strain ATCC MYA-4620 / CBS 123657 / FGSC 9075 / NRRL 31084 / PH-1) (Wheat head blight fungus), this protein is Hydroxymethylglutaryl-CoA synthase ERG13.